Here is a 201-residue protein sequence, read N- to C-terminus: Translation initiation factor IF-3 (201 aa).

Residues 167–201 (PHRGAKTRARARHPGEPAGGPPPKPTAGDSKAAPN) form a disordered region. Positions 169–178 (RGAKTRARAR) are enriched in basic residues.

It belongs to the IF-3 family. In terms of assembly, monomer.

Its subcellular location is the cytoplasm. Functionally, IF-3 binds to the 30S ribosomal subunit and shifts the equilibrium between 70S ribosomes and their 50S and 30S subunits in favor of the free subunits, thus enhancing the availability of 30S subunits on which protein synthesis initiation begins. This chain is Translation initiation factor IF-3, found in Mycobacterium bovis (strain ATCC BAA-935 / AF2122/97).